We begin with the raw amino-acid sequence, 222 residues long: Exosome complex component Rrp4 (222 aa).

Positions 63–131 (GDLVIGRVTG…EINRVKLTLR (69 aa)) constitute an S1 motif domain.

This sequence belongs to the RRP4 family. In terms of assembly, component of the archaeal exosome complex. Forms a trimer of Rrp4 and/or Csl4 subunits. The trimer associates with a hexameric ring-like arrangement composed of 3 Rrp41-Rrp42 heterodimers.

It localises to the cytoplasm. Functionally, non-catalytic component of the exosome, which is a complex involved in RNA degradation. Increases the RNA binding and the efficiency of RNA degradation. Confers strong poly(A) specificity to the exosome. The chain is Exosome complex component Rrp4 from Methanosphaera stadtmanae (strain ATCC 43021 / DSM 3091 / JCM 11832 / MCB-3).